The sequence spans 104 residues: Acetylcholine receptor subunit alpha (104 aa).

At 1-104 the chain is on the extracellular side; the sequence is NPPAIFKSYC…YFIVNVIIPC (104 aa). Intrachain disulfides connect cysteine 10-cysteine 24 and cysteine 74-cysteine 75. Asparagine 23 is a glycosylation site (N-linked (GlcNAc...) asparagine).

This sequence belongs to the ligand-gated ion channel (TC 1.A.9) family. Acetylcholine receptor (TC 1.A.9.1) subfamily. Alpha-1/CHRNA1 sub-subfamily. As to quaternary structure, one of the alpha chains that assemble within the acetylcholine receptor, a pentamer of two alpha chains, a beta, a delta, and a gamma or epsilon chains.

The protein resides in the postsynaptic cell membrane. It localises to the cell membrane. It carries out the reaction K(+)(in) = K(+)(out). It catalyses the reaction Na(+)(in) = Na(+)(out). Functionally, upon acetylcholine binding, the AChR responds by an extensive change in conformation that affects all subunits and leads to opening of an ion-conducting channel across the plasma membrane. In Naja naja (Indian cobra), this protein is Acetylcholine receptor subunit alpha (CHRNA1).